The following is a 655-amino-acid chain: Very long-chain specific acyl-CoA dehydrogenase, mitochondrial (655 aa).

A mitochondrion-targeting transit peptide spans 1–40 (MQSARMTPSVGRQLLRLGARSSRSAALQGQPRPTSAQRLY). Residues 1 to 70 (MQSARMTPSV…TREKPARAES (70 aa)) are disordered. Residues 21-37 (SSRSAALQGQPRPTSAQ) are compositionally biased toward polar residues. The interval 41-482 (ASEATQAVLE…ALQGCMDKGK (442 aa)) is catalytic. Residue K51 is modified to N6-acetyllysine. Residues 60-70 (STREKPARAES) are compositionally biased toward basic and acidic residues. 2 positions are modified to N6-acetyllysine; alternate: K71 and K127. An N6-succinyllysine; alternate mark is found at K71 and K127. K195 bears the N6-succinyllysine mark. Residue 214 to 223 (FCLTEPSSGS) participates in FAD binding. C237 carries the S-nitrosocysteine modification. An N6-acetyllysine; alternate modification is found at K239. Residue K239 is modified to N6-succinyllysine; alternate. 249–251 (WIS) provides a ligand contact to FAD. K268 is modified (N6-succinyllysine). N6-acetyllysine; alternate occurs at positions 276 and 278. K276 and K278 each carry N6-succinyllysine; alternate. 2 positions are modified to N6-acetyllysine: K298 and K316. K331 is modified (N6-acetyllysine; alternate). K331 is modified (N6-succinyllysine; alternate). The residue at position 372 (K372) is an N6-succinyllysine. Position 461 to 463 (461 to 463 (FEG)) interacts with substrate. E462 acts as the Proton acceptor in catalysis. 464-466 (TND) contributes to the FAD binding site. Residue K482 is modified to N6-acetyllysine; alternate. At K482 the chain carries N6-succinyllysine; alternate. Residues 483–516 (ELTGLGNALKNPLGNVGLLIGEASKQLRRRTGIG) are membrane-anchoring. A phosphoserine mark is found at S517 and S522. The residue at position 550 (K550) is an N6-acetyllysine. Residue K556 is modified to N6-acetyllysine; alternate. At K556 the chain carries N6-succinyllysine; alternate. Q562 provides a ligand contact to FAD. N6-succinyllysine is present on K639.

The protein belongs to the acyl-CoA dehydrogenase family. In terms of assembly, homodimer. Homodimerizes after import into the mitochondrion. Requires FAD as cofactor. S-nitrosylation at Cys-237 in liver improves catalytic efficiency. As to expression, widely expressed (at protein level).

It is found in the mitochondrion inner membrane. It catalyses the reaction a very-long-chain 2,3-saturated fatty acyl-CoA + oxidized [electron-transfer flavoprotein] + H(+) = a very-long-chain (2E)-enoyl-CoA + reduced [electron-transfer flavoprotein]. The catalysed reaction is dodecanoyl-CoA + oxidized [electron-transfer flavoprotein] + H(+) = (2E)-dodecenoyl-CoA + reduced [electron-transfer flavoprotein]. It carries out the reaction tetradecanoyl-CoA + oxidized [electron-transfer flavoprotein] + H(+) = (2E)-tetradecenoyl-CoA + reduced [electron-transfer flavoprotein]. The enzyme catalyses oxidized [electron-transfer flavoprotein] + hexadecanoyl-CoA + H(+) = (2E)-hexadecenoyl-CoA + reduced [electron-transfer flavoprotein]. It catalyses the reaction octadecanoyl-CoA + oxidized [electron-transfer flavoprotein] + H(+) = (2E)-octadecenoyl-CoA + reduced [electron-transfer flavoprotein]. The catalysed reaction is eicosanoyl-CoA + oxidized [electron-transfer flavoprotein] + H(+) = (2E)-eicosenoyl-CoA + reduced [electron-transfer flavoprotein]. It carries out the reaction docosanoyl-CoA + oxidized [electron-transfer flavoprotein] + H(+) = (2E)-docosenoyl-CoA + reduced [electron-transfer flavoprotein]. The enzyme catalyses tetracosanoyl-CoA + oxidized [electron-transfer flavoprotein] + H(+) = (2E)-tetracosenoyl-CoA + reduced [electron-transfer flavoprotein]. Its pathway is lipid metabolism; mitochondrial fatty acid beta-oxidation. Functionally, very long-chain specific acyl-CoA dehydrogenase is one of the acyl-CoA dehydrogenases that catalyze the first step of mitochondrial fatty acid beta-oxidation, an aerobic process breaking down fatty acids into acetyl-CoA and allowing the production of energy from fats. The first step of fatty acid beta-oxidation consists in the removal of one hydrogen from C-2 and C-3 of the straight-chain fatty acyl-CoA thioester, resulting in the formation of trans-2-enoyl-CoA. Among the different mitochondrial acyl-CoA dehydrogenases, very long-chain specific acyl-CoA dehydrogenase acts specifically on acyl-CoAs with saturated 12 to 24 carbons long primary chains. The chain is Very long-chain specific acyl-CoA dehydrogenase, mitochondrial from Rattus norvegicus (Rat).